Reading from the N-terminus, the 339-residue chain is RNA 3'-terminal phosphate cyclase (339 aa).

ATP contacts are provided by residues Q101 and 283-286 (HMSD). Catalysis depends on H307, which acts as the Tele-AMP-histidine intermediate.

This sequence belongs to the RNA 3'-terminal cyclase family. Type 1 subfamily.

It is found in the cytoplasm. It catalyses the reaction a 3'-end 3'-phospho-ribonucleotide-RNA + ATP = a 3'-end 2',3'-cyclophospho-ribonucleotide-RNA + AMP + diphosphate. In terms of biological role, catalyzes the conversion of 3'-phosphate to a 2',3'-cyclic phosphodiester at the end of RNA. The mechanism of action of the enzyme occurs in 3 steps: (A) adenylation of the enzyme by ATP; (B) transfer of adenylate to an RNA-N3'P to produce RNA-N3'PP5'A; (C) and attack of the adjacent 2'-hydroxyl on the 3'-phosphorus in the diester linkage to produce the cyclic end product. The biological role of this enzyme is unknown but it is likely to function in some aspects of cellular RNA processing. The sequence is that of RNA 3'-terminal phosphate cyclase from Sulfurisphaera tokodaii (strain DSM 16993 / JCM 10545 / NBRC 100140 / 7) (Sulfolobus tokodaii).